A 257-amino-acid chain; its full sequence is Diaminopimelate epimerase (257 aa).

The substrate site is built by Asn-13, Gln-46, and Asn-66. Cys-75 acts as the Proton donor in catalysis. Substrate is bound by residues 76–77 (GN), Asn-145, Asn-175, and 193–194 (ER). Cys-202 (proton acceptor) is an active-site residue. Residue 203–204 (GS) coordinates substrate.

Belongs to the diaminopimelate epimerase family. In terms of assembly, homodimer.

The protein resides in the cytoplasm. It catalyses the reaction (2S,6S)-2,6-diaminopimelate = meso-2,6-diaminopimelate. Its pathway is amino-acid biosynthesis; L-lysine biosynthesis via DAP pathway; DL-2,6-diaminopimelate from LL-2,6-diaminopimelate: step 1/1. Catalyzes the stereoinversion of LL-2,6-diaminopimelate (L,L-DAP) to meso-diaminopimelate (meso-DAP), a precursor of L-lysine and an essential component of the bacterial peptidoglycan. The chain is Diaminopimelate epimerase from Gluconobacter oxydans (strain 621H) (Gluconobacter suboxydans).